Here is a 121-residue protein sequence, read N- to C-terminus: Holo-[acyl-carrier-protein] synthase (121 aa).

Positions 8 and 55 each coordinate Mg(2+).

The protein belongs to the P-Pant transferase superfamily. AcpS family. Mg(2+) serves as cofactor.

The protein resides in the cytoplasm. The catalysed reaction is apo-[ACP] + CoA = holo-[ACP] + adenosine 3',5'-bisphosphate + H(+). Its function is as follows. Transfers the 4'-phosphopantetheine moiety from coenzyme A to a Ser of acyl-carrier-protein. The chain is Holo-[acyl-carrier-protein] synthase from Caldicellulosiruptor bescii (strain ATCC BAA-1888 / DSM 6725 / KCTC 15123 / Z-1320) (Anaerocellum thermophilum).